We begin with the raw amino-acid sequence, 85 residues long: ATP synthase subunit c (85 aa).

Helical transmembrane passes span 22-39 and 65-85; these read AIGA…IGKI and AALI…VFFL.

Belongs to the ATPase C chain family. F-type ATPases have 2 components, F(1) - the catalytic core - and F(0) - the membrane proton channel. F(1) has five subunits: alpha(3), beta(3), gamma(1), delta(1), epsilon(1). F(0) has three main subunits: a(1), b(2) and c(10-14). The alpha and beta chains form an alternating ring which encloses part of the gamma chain. F(1) is attached to F(0) by a central stalk formed by the gamma and epsilon chains, while a peripheral stalk is formed by the delta and b chains.

It localises to the cell inner membrane. F(1)F(0) ATP synthase produces ATP from ADP in the presence of a proton or sodium gradient. F-type ATPases consist of two structural domains, F(1) containing the extramembraneous catalytic core and F(0) containing the membrane proton channel, linked together by a central stalk and a peripheral stalk. During catalysis, ATP synthesis in the catalytic domain of F(1) is coupled via a rotary mechanism of the central stalk subunits to proton translocation. In terms of biological role, key component of the F(0) channel; it plays a direct role in translocation across the membrane. A homomeric c-ring of between 10-14 subunits forms the central stalk rotor element with the F(1) delta and epsilon subunits. The sequence is that of ATP synthase subunit c from Bacteroides thetaiotaomicron (strain ATCC 29148 / DSM 2079 / JCM 5827 / CCUG 10774 / NCTC 10582 / VPI-5482 / E50).